Consider the following 119-residue polypeptide: Large ribosomal subunit protein bL20 (119 aa).

It belongs to the bacterial ribosomal protein bL20 family.

In terms of biological role, binds directly to 23S ribosomal RNA and is necessary for the in vitro assembly process of the 50S ribosomal subunit. It is not involved in the protein synthesizing functions of that subunit. The chain is Large ribosomal subunit protein bL20 from Latilactobacillus sakei subsp. sakei (strain 23K) (Lactobacillus sakei subsp. sakei).